Reading from the N-terminus, the 277-residue chain is Undecaprenyl-diphosphatase (277 aa).

A run of 5 helical transmembrane segments spans residues 83-103 (FALNIIIAFLPAALLGLVFAS), 109-129 (LFAPVPVAIAFIVGGFIILWI), 188-208 (ATEFSFFLAIPTLMGATVYSV), 218-238 (ADIPLFGLGGFAAFVSAFLCV), and 256-276 (YRIVFGLFVLLSAYYGWVVWA).

It belongs to the UppP family.

The protein localises to the cell inner membrane. It carries out the reaction di-trans,octa-cis-undecaprenyl diphosphate + H2O = di-trans,octa-cis-undecaprenyl phosphate + phosphate + H(+). Catalyzes the dephosphorylation of undecaprenyl diphosphate (UPP). Confers resistance to bacitracin. This Janthinobacterium sp. (strain Marseille) (Minibacterium massiliensis) protein is Undecaprenyl-diphosphatase.